We begin with the raw amino-acid sequence, 273 residues long: Zinc finger protein 80 (273 aa).

A C2H2-type 1 zinc finger spans residues 49–71 (YKCKECGSVFNKNSLLVRHQQIH). Residues 77-99 (YEYQECGKAFPEKVDFVRHMRIH) form a C2H2-type 2; degenerate zinc finger. The C2H2-type 3; atypical zinc finger occupies 105 to 127 (CKCVECRKVFNRRSHLLCYRQIH). 4 consecutive C2H2-type zinc fingers follow at residues 133 to 155 (YECS…RVTH), 161 to 183 (FGCK…MKIH), 187 to 211 (KPCK…SMTH), and 217 to 239 (YECK…TRSH).

This sequence belongs to the krueppel C2H2-type zinc-finger protein family.

Its subcellular location is the nucleus. May be involved in transcriptional regulation. This is Zinc finger protein 80 (ZNF80) from Pan troglodytes (Chimpanzee).